Consider the following 377-residue polypeptide: Nitric oxide reductase FlRd-NAD(+) reductase (377 aa).

It belongs to the FAD-dependent oxidoreductase family. The cofactor is FAD.

It localises to the cytoplasm. It carries out the reaction 2 reduced [nitric oxide reductase rubredoxin domain] + NAD(+) + H(+) = 2 oxidized [nitric oxide reductase rubredoxin domain] + NADH. Its pathway is nitrogen metabolism; nitric oxide reduction. Functionally, one of at least two accessory proteins for anaerobic nitric oxide (NO) reductase. Reduces the rubredoxin moiety of NO reductase. This Enterobacter sp. (strain 638) protein is Nitric oxide reductase FlRd-NAD(+) reductase.